The primary structure comprises 245 residues: MNGRADFREPNAEVPRPIPHIGPDYIPTEEERRVFAECNDESFWFRSVPLAATSMLITQGLISKGILSSHPKYGSIPKLIFACIMGYFAGKLSYVKTCQEKFKKLENSPLGEALRSGQARRSSPPGHYYQKSKYDSNVSGQSSFVTSPAADNIEMLPHYEPIPFSSSMNESAPTGITDHIVQGPDPNLEESPKRKNITYEELRNKNRESYEVSLTQKTDPSVRPMHERVPKKEVKVNKYGDTWDE.

One can recognise an OCIA domain in the interval 1 to 112 (MNGRADFREP…KKLENSPLGE (112 aa)). 3 positions are modified to phosphoserine: Ser108, Ser116, and Ser123. Disordered stretches follow at residues 111-142 (GEALRSGQARRSSPPGHYYQKSKYDSNVSGQS) and 164-245 (FSSS…TWDE). A compositionally biased stretch (polar residues) spans 164 to 174 (FSSSMNESAPT). Basic and acidic residues-rich tracts occupy residues 190 to 210 (ESPKRKNITYEELRNKNRESY) and 224 to 238 (PMHERVPKKEVKVNK). Phosphoserine is present on Ser191.

The protein belongs to the OCIAD1 family. As to quaternary structure, interacts with OCIAD2. Interacts with STAT3.

It localises to the endosome. Functionally, maintains stem cell potency. Increases STAT3 phosphorylation and controls ERK phosphorylation. May act as a scaffold, increasing STAT3 recruitment onto endosomes. The polypeptide is OCIA domain-containing protein 1 (OCIAD1) (Pongo abelii (Sumatran orangutan)).